The primary structure comprises 150 residues: UPF0756 membrane protein A1S_2121 (150 aa).

4 consecutive transmembrane segments (helical) span residues Ser-22–Leu-42, Phe-45–Val-65, Phe-83–Gly-103, and Val-115–Val-135.

Belongs to the UPF0756 family.

Its subcellular location is the cell membrane. The protein is UPF0756 membrane protein A1S_2121 of Acinetobacter baumannii (strain ATCC 17978 / DSM 105126 / CIP 53.77 / LMG 1025 / NCDC KC755 / 5377).